The sequence spans 252 residues: 2-succinyl-6-hydroxy-2,4-cyclohexadiene-1-carboxylate synthase (252 aa).

It belongs to the AB hydrolase superfamily. MenH family. Monomer.

The enzyme catalyses 5-enolpyruvoyl-6-hydroxy-2-succinyl-cyclohex-3-ene-1-carboxylate = (1R,6R)-6-hydroxy-2-succinyl-cyclohexa-2,4-diene-1-carboxylate + pyruvate. The protein operates within quinol/quinone metabolism; 1,4-dihydroxy-2-naphthoate biosynthesis; 1,4-dihydroxy-2-naphthoate from chorismate: step 3/7. It participates in quinol/quinone metabolism; menaquinone biosynthesis. Its function is as follows. Catalyzes a proton abstraction reaction that results in 2,5-elimination of pyruvate from 2-succinyl-5-enolpyruvyl-6-hydroxy-3-cyclohexene-1-carboxylate (SEPHCHC) and the formation of 2-succinyl-6-hydroxy-2,4-cyclohexadiene-1-carboxylate (SHCHC). The chain is 2-succinyl-6-hydroxy-2,4-cyclohexadiene-1-carboxylate synthase from Escherichia fergusonii (strain ATCC 35469 / DSM 13698 / CCUG 18766 / IAM 14443 / JCM 21226 / LMG 7866 / NBRC 102419 / NCTC 12128 / CDC 0568-73).